Consider the following 928-residue polypeptide: Sodium/calcium exchanger 3 (928 aa).

Residues Met1 to Ala30 form the signal peptide. The Extracellular portion of the chain corresponds to Glu31 to Lys73. Residue Asn45 is glycosylated (N-linked (GlcNAc...) asparagine). A helical membrane pass occupies residues Ile74–Ile94. Over Ala95–Glu147 the chain is Cytoplasmic. The chain crosses the membrane as a helical span at residues Ile148–Ser168. Position 169 (Thr169) is a topological domain, extracellular. The chain crosses the membrane as a helical span at residues Ile170–Pro190. Over Asp191–Arg201 the chain is Cytoplasmic. The helical transmembrane segment at Val202–Ala222 threads the bilayer. Residues Val223–Gln230 are Extracellular-facing. A helical transmembrane segment spans residues Val231–Ala251. At Asp252–Ser727 the chain is on the cytoplasmic side. Positions Lys253–Gly272 are putative calmodulin-binding region. Calx-beta domains lie at Glu390 to Ser485 and Ala519 to Met618. Residues Glu409, Asp445, Asp470, Asp471, Ile473, Glu475, Glu478, Asp525, Asp526, Asp527, Glu543, Asp579, Asp605, and Glu673 each contribute to the Ca(2+) site. The chain crosses the membrane as a helical span at residues Cys728–Pro748. The Extracellular segment spans residues Pro749 to Gly755. The chain crosses the membrane as a helical span at residues Trp756–Leu776. Topologically, residues Ala777–His779 are cytoplasmic. Residues Phe780–Thr800 traverse the membrane as a helical segment. Topologically, residues Ser801–Asn829 are extracellular. An N-linked (GlcNAc...) asparagine glycan is attached at Asn824. A helical transmembrane segment spans residues Ala830 to Met850. Residues Gln851–Thr861 are Cytoplasmic-facing. Residues Leu862–Tyr882 form a helical membrane-spanning segment. Residues Arg883 to Trp904 lie on the Extracellular side of the membrane. Residues Leu905 to Ile925 form a helical membrane-spanning segment. Residues Lys926–Phe928 are Cytoplasmic-facing.

Belongs to the Ca(2+):cation antiporter (CaCA) (TC 2.A.19) family. SLC8 subfamily. As to quaternary structure, interacts with AKAP1. In terms of tissue distribution, detected in gray and white matter in the spinal cord. Detected in hippocampus neurons. Detected in brain cortex neurons. Detected in skeletal muscle (at protein level). Isoform 1 and isoform 2 are highly expressed in brain; levels are higher for isoform 2. Isoform 1 and isoform 2 are detected in soleus muscle; levels are higher for isoform 1. Detected in gastrocnemius muscle.

It localises to the cell membrane. The protein localises to the perikaryon. It is found in the cell projection. Its subcellular location is the dendrite. The protein resides in the dendritic spine. It localises to the sarcolemma. The protein localises to the cytoplasm. It is found in the sarcoplasm. Its subcellular location is the cell junction. The protein resides in the mitochondrion outer membrane. It localises to the perinuclear region. The protein localises to the endoplasmic reticulum membrane. The catalysed reaction is Ca(2+)(in) + 3 Na(+)(out) = Ca(2+)(out) + 3 Na(+)(in). With respect to regulation, calcium transport is stimulated by cytoplasmic Ca(2+) and is inhibited by Na(+). Isoform 1 is more sensitive to stimulation by Ca(2+) than isoform 2. Isoform 2 is more sensitive to inactivation by Na(+). Functionally, mediates the electrogenic exchange of Ca(2+) against Na(+) ions across the cell membrane, and thereby contributes to the regulation of cytoplasmic Ca(2+) levels and Ca(2+)-dependent cellular processes. Contributes to cellular Ca(2+) homeostasis in excitable cells, both in muscle and in brain. In a first phase, voltage-gated channels mediate the rapid increase of cytoplasmic Ca(2+) levels due to release of Ca(2+) stores from the endoplasmic reticulum. SLC8A3 mediates the export of Ca(2+) from the cell during the next phase, so that cytoplasmic Ca(2+) levels rapidly return to baseline. Contributes to Ca(2+) transport during excitation-contraction coupling in muscle. In neurons, contributes to the rapid decrease of cytoplasmic Ca(2+) levels back to baseline after neuronal activation, and thereby contributes to modulate synaptic plasticity, learning and memory. Required for normal oligodendrocyte differentiation and for normal myelination. Mediates Ca(2+) efflux from mitochondria and contributes to mitochondrial Ca(2+) ion homeostasis. Isoform 1 displays higher calcium exchanger activity than isoform 2, probably because isoform 1 has a lower threshold for activation by cytoplasmic Ca(2+). This Mus musculus (Mouse) protein is Sodium/calcium exchanger 3.